Consider the following 175-residue polypeptide: Large ribosomal subunit protein uL10 (175 aa).

Belongs to the universal ribosomal protein uL10 family. Part of the ribosomal stalk of the 50S ribosomal subunit. The N-terminus interacts with L11 and the large rRNA to form the base of the stalk. The C-terminus forms an elongated spine to which L12 dimers bind in a sequential fashion forming a multimeric L10(L12)X complex.

Forms part of the ribosomal stalk, playing a central role in the interaction of the ribosome with GTP-bound translation factors. This chain is Large ribosomal subunit protein uL10, found in Mycobacterium sp. (strain KMS).